Here is a 113-residue protein sequence, read N- to C-terminus: Ubiquinol-cytochrome-c reductase complex assembly factor 4 (113 aa).

Positions 1–18 are cleaved as a signal peptide; the sequence is MWGSLCKAPLLRLRPTFA. The Mitochondrial matrix segment spans residues 19–72; that stretch reads AVSNVKTIHIKASPDYNEGIDKSKPLKFSTSKASHRHWTVAKSLGSNQQRPWWK. The helical transmembrane segment at 73 to 89 threads the bilayer; sequence VVPLSVFLTTVLLWAIF. The Mitochondrial intermembrane portion of the chain corresponds to 90 to 113; sequence RKETDIDEAIYKPIEQLQDESENK.

The protein belongs to the UQCC4 family.

The protein localises to the mitochondrion inner membrane. Its function is as follows. Required for the assembly and stability of the mitochondrial ubiquinol-cytochrome c reductase complex (complex III (CIII) or cytochrome b-c1 complex), a multisubunit transmembrane complex that is part of the mitochondrial electron transport chain (ETC) which drives oxidative phosphorylation. The protein is Ubiquinol-cytochrome-c reductase complex assembly factor 4 (uqcc4) of Xenopus tropicalis (Western clawed frog).